The following is a 311-amino-acid chain: F-box protein At3g18320 (311 aa).

Residues 1–46 (MTLPELPKDLVEEILCFVPATSLKRLRSTCKGWNRLFKDDKRFARK) form the F-box domain.

The sequence is that of F-box protein At3g18320 from Arabidopsis thaliana (Mouse-ear cress).